The following is a 152-amino-acid chain: Antiholin-like protein LrgA (152 aa).

The next 4 membrane-spanning stretches (helical) occupy residues 23 to 43 (YSIF…KIIE), 45 to 65 (FMPI…IALC), 77 to 97 (VGTA…ISVI), and 108 to 128 (ILII…TGFS).

This sequence belongs to the CidA/LrgA family. LrgA subfamily.

It localises to the cell membrane. Functionally, inhibits the expression or activity of extracellular murein hydrolases by interacting, possibly with LrgB, with the holin-like proteins CidA and/or CidB. The LrgAB and CidAB proteins may affect the proton motive force of the membrane. May be involved in programmed cell death (PCD), possibly triggering PCD in response to antibiotics and environmental stresses. The protein is Antiholin-like protein LrgA of Staphylococcus epidermidis (strain ATCC 12228 / FDA PCI 1200).